The following is a 328-amino-acid chain: Tryptophan--tRNA ligase (328 aa).

ATP contacts are provided by residues 8–10 and 16–17; these read RPT and GH. The short motif at 9-17 is the 'HIGH' region element; it reads PTGKLHIGH. Asp-136 contributes to the L-tryptophan binding site. ATP contacts are provided by residues 148 to 150, Leu-186, and 193 to 197; these read GED and KMSKS. Positions 193-197 match the 'KMSKS' region motif; it reads KMSKS.

This sequence belongs to the class-I aminoacyl-tRNA synthetase family. Homodimer.

Its subcellular location is the cytoplasm. The enzyme catalyses tRNA(Trp) + L-tryptophan + ATP = L-tryptophyl-tRNA(Trp) + AMP + diphosphate + H(+). Functionally, catalyzes the attachment of tryptophan to tRNA(Trp). The chain is Tryptophan--tRNA ligase from Thermotoga maritima (strain ATCC 43589 / DSM 3109 / JCM 10099 / NBRC 100826 / MSB8).